The primary structure comprises 204 residues: Outer-membrane lipoprotein carrier protein (204 aa).

The signal sequence occupies residues 1–21 (MKKYLNLTALLLVGISNVTWA).

This sequence belongs to the LolA family. In terms of assembly, monomer.

Its subcellular location is the periplasm. Functionally, participates in the translocation of lipoproteins from the inner membrane to the outer membrane. Only forms a complex with a lipoprotein if the residue after the N-terminal Cys is not an aspartate (The Asp acts as a targeting signal to indicate that the lipoprotein should stay in the inner membrane). In Histophilus somni (strain 2336) (Haemophilus somnus), this protein is Outer-membrane lipoprotein carrier protein.